The chain runs to 773 residues: E3 ubiquitin-protein ligase RFWD3 (773 aa).

Disordered regions lie at residues 18–67 (VAEQ…SQVG), 92–117 (RVEN…IPVS), 139–230 (LRPP…EEVV), and 259–279 (GETL…SVSK). At serine 47 the chain carries Phosphoserine; by ATM and ATR. Over residues 50–59 (APPLLQPAPA) the composition is skewed to low complexity. Phosphoserine; by ATM and ATR is present on serine 64. The span at 151-164 (RSRRRRGSASRRSR) shows a compositional bias: basic residues. Residues 186–205 (VSRTQPHLPSMSQDSETRNP) show a composition bias toward polar residues. Low complexity predominate over residues 207–221 (SEDLQVSSSSSSDSE). Polar residues predominate over residues 263–273 (PKQSPQKTNPL). The segment at 287–331 (CTICFEHWTNAGDHRLSALRCGHLFGYKCISKWLKGQARKCPQCN) adopts an RING-type; degenerate zinc-finger fold. Residues 361–403 (SLLKEQMLRKQAELESAQCRLQLQVLTDECSKLHSRVQDLQKL) are a coiled coil. WD repeat units follow at residues 494–536 (MHGK…QTYN), 538–576 (GRPV…SHIQ), and 582–627 (KARC…SHWP).

In terms of assembly, interacts with MDM2 and p53/TP53. Binds to the RPA complex via direct interaction with RPA2. Interacts with RAD51. In terms of processing, phosphorylated at Ser-46 and Ser-63 upon DNA damage by ATM or ATR. ATM phosphorylation occurs at early times upon DNA damage, while ATR is the major kinase at later times. Phosphorylation by ATM and ATR is required to stabilize p53/TP53. Part of the phosphorylation depends upon RPA2 presence.

It is found in the nucleus. Its subcellular location is the PML body. It localises to the cytoplasm. It carries out the reaction S-ubiquitinyl-[E2 ubiquitin-conjugating enzyme]-L-cysteine + [acceptor protein]-L-lysine = [E2 ubiquitin-conjugating enzyme]-L-cysteine + N(6)-ubiquitinyl-[acceptor protein]-L-lysine.. Its pathway is protein modification; protein ubiquitination. E3 ubiquitin-protein ligase required for the repair of DNA interstrand cross-links (ICL) in response to DNA damage. Plays a key role in RPA-mediated DNA damage signaling and repair. Acts by mediating ubiquitination of the RPA complex (RPA1, RPA2 and RPA3 subunits) and RAD51 at stalled replication forks, leading to remove them from DNA damage sites and promote homologous recombination. Also mediates the ubiquitination of p53/TP53 in the late response to DNA damage, and acts as a positive regulator of p53/TP53 stability, thereby regulating the G1/S DNA damage checkpoint. May act by catalyzing the formation of short polyubiquitin chains on p53/TP53 that are not targeted to the proteasome. In response to ionizing radiation, interacts with MDM2 and enhances p53/TP53 ubiquitination, possibly by restricting MDM2 from extending polyubiquitin chains on ubiquitinated p53/TP53. Required to translesion DNA synthesis across DNA-protein cross-link adducts by catalyzing ubiquitination of proteins on single-stranded DNA (ssDNA). The protein is E3 ubiquitin-protein ligase RFWD3 (RFWD3) of Ailuropoda melanoleuca (Giant panda).